The primary structure comprises 214 residues: Dual specificity phosphatase 29 (214 aa).

Residues 46-194 (HVNEVWPNLY…LRELDIELAL (149 aa)) enclose the Tyrosine-protein phosphatase domain. 138 to 145 (HCAMGRSR) contacts substrate. Residue Cys-139 is the Phosphocysteine intermediate of the active site.

This sequence belongs to the protein-tyrosine phosphatase family. Non-receptor class dual specificity subfamily.

The protein resides in the cytoplasm. Its subcellular location is the nucleus. The catalysed reaction is O-phospho-L-tyrosyl-[protein] + H2O = L-tyrosyl-[protein] + phosphate. It carries out the reaction O-phospho-L-seryl-[protein] + H2O = L-seryl-[protein] + phosphate. The enzyme catalyses O-phospho-L-threonyl-[protein] + H2O = L-threonyl-[protein] + phosphate. Functionally, dual specificity phosphatase able to dephosphorylate phosphotyrosine, phosphoserine and phosphothreonine residues within the same substrate, with a preference for phosphotyrosine as a substrate. Involved in the modulation of AMPK and MAPK1/2 signaling pathways. This is Dual specificity phosphatase 29 (DUSP29) from Gallus gallus (Chicken).